The primary structure comprises 438 residues: 3-phosphoshikimate 1-carboxyvinyltransferase (438 aa).

3-phosphoshikimate is bound by residues K21, S22, and R26. K21 contributes to the phosphoenolpyruvate binding site. G95 and R123 together coordinate phosphoenolpyruvate. 4 residues coordinate 3-phosphoshikimate: S167, Q169, D315, and K342. Q169 is a binding site for phosphoenolpyruvate. Catalysis depends on D315, which acts as the Proton acceptor. Residues R346 and R387 each contribute to the phosphoenolpyruvate site.

Belongs to the EPSP synthase family. In terms of assembly, monomer.

The protein localises to the cytoplasm. It catalyses the reaction 3-phosphoshikimate + phosphoenolpyruvate = 5-O-(1-carboxyvinyl)-3-phosphoshikimate + phosphate. The protein operates within metabolic intermediate biosynthesis; chorismate biosynthesis; chorismate from D-erythrose 4-phosphate and phosphoenolpyruvate: step 6/7. Catalyzes the transfer of the enolpyruvyl moiety of phosphoenolpyruvate (PEP) to the 5-hydroxyl of shikimate-3-phosphate (S3P) to produce enolpyruvyl shikimate-3-phosphate and inorganic phosphate. The sequence is that of 3-phosphoshikimate 1-carboxyvinyltransferase from Coxiella burnetii (strain CbuG_Q212) (Coxiella burnetii (strain Q212)).